The chain runs to 226 residues: MGIRAIVVDTAGTTTDLNFIQDVLFPYSVKALPDFLEQNQHNVLVENCICDTKDIALEPEADLARVTEILQQWVNEDRKATPLKTLQGLIWKQGYAHGEFKGHIFPDFIEAVKRFSTQNLRIYSFSSGSVDAQKLLFSHSDGGDLTEMFNGHFDTRTGNKLDKQAYCNILNTISLSPKQVLFVSDVIEELKAADAAGMMTCQMVRDSKQRTGDFRKISSFDELQIE.

The protein belongs to the HAD-like hydrolase superfamily. MasA/MtnC family. As to quaternary structure, monomer. Mg(2+) is required as a cofactor.

The enzyme catalyses 5-methylsulfanyl-2,3-dioxopentyl phosphate + H2O = 1,2-dihydroxy-5-(methylsulfanyl)pent-1-en-3-one + phosphate. It participates in amino-acid biosynthesis; L-methionine biosynthesis via salvage pathway; L-methionine from S-methyl-5-thio-alpha-D-ribose 1-phosphate: step 3/6. Its pathway is amino-acid biosynthesis; L-methionine biosynthesis via salvage pathway; L-methionine from S-methyl-5-thio-alpha-D-ribose 1-phosphate: step 4/6. Its function is as follows. Bifunctional enzyme that catalyzes the enolization of 2,3-diketo-5-methylthiopentyl-1-phosphate (DK-MTP-1-P) into the intermediate 2-hydroxy-3-keto-5-methylthiopentenyl-1-phosphate (HK-MTPenyl-1-P), which is then dephosphorylated to form the acireductone 1,2-dihydroxy-3-keto-5-methylthiopentene (DHK-MTPene). This Shewanella putrefaciens (strain CN-32 / ATCC BAA-453) protein is Enolase-phosphatase E1.